We begin with the raw amino-acid sequence, 179 residues long: Large ribosomal subunit protein uL5 (179 aa).

Belongs to the universal ribosomal protein uL5 family. In terms of assembly, part of the 50S ribosomal subunit; part of the 5S rRNA/L5/L18/L25 subcomplex. Contacts the 5S rRNA and the P site tRNA. Forms a bridge to the 30S subunit in the 70S ribosome.

Its function is as follows. This is one of the proteins that bind and probably mediate the attachment of the 5S RNA into the large ribosomal subunit, where it forms part of the central protuberance. In the 70S ribosome it contacts protein S13 of the 30S subunit (bridge B1b), connecting the 2 subunits; this bridge is implicated in subunit movement. Contacts the P site tRNA; the 5S rRNA and some of its associated proteins might help stabilize positioning of ribosome-bound tRNAs. The sequence is that of Large ribosomal subunit protein uL5 from Lysinibacillus sphaericus (strain C3-41).